We begin with the raw amino-acid sequence, 508 residues long: Cytochrome P450 monooxygenase pkfB (508 aa).

Residues 9–29 (FSLGLSQILVCLALLYAAIHI) traverse the membrane as a helical segment. Asn-57 and Asn-305 each carry an N-linked (GlcNAc...) asparagine glycan. Cys-450 is a heme binding site.

This sequence belongs to the cytochrome P450 family. Heme is required as a cofactor.

The protein localises to the membrane. The protein operates within secondary metabolite biosynthesis. In terms of biological role, cytochrome P450 monooxygenase; part of the gene cluster that mediates the biosynthesis of aspernidine A, a prenylated isoindolinone. The starting point of the biosynthesis of aspernidin A is the production of orsellinaldehyde by the non-reducing polyketide synthase pkfA. Hydroxylation, methylation of one of the phenol groups, and prenylation, presumably catalyzed by the prenyltransferase pkfE, would be needed to yield aspernidine D. Subsequently, the cytochrome P450 monooxygenase pkfB is responsible for hydroxylation of aspernidine D to yield aspernidine E. The dehydrogenase pkfF may be responsible for further oxidation of aspernidine E to form a dialdehyde intermediate which is further transformed in a series of steps, some of which are enzyme-mediated, to generate aspernidine A. The possibility that additional enzymes outside of the cluster are involved in aspernidine A biosynthesis cannot be excluded. The polypeptide is Cytochrome P450 monooxygenase pkfB (Emericella nidulans (strain FGSC A4 / ATCC 38163 / CBS 112.46 / NRRL 194 / M139) (Aspergillus nidulans)).